The sequence spans 454 residues: MLDTEPDLSTRLFSHIDFTHGAVAAVSGGSDSTALLLLLKHHFDRTGSSAKLLAVTIDHGLRQGSAAEAQAVAKLCAERGIAHRTLTWTGRKPSTGLPAAARDARYHLLAEAARAEGIGLIVTGHTADDQAETVLMRHARDRELADLAGRGLAGMAPATLYDWREWIVRPLLGTRRSALRDFLRREHVGWAEDPTNIDEAFERPRVRAALAGESAGHMENTLRLAGQAAVERGQLGASAANLIRRIASQPSTGLIRLDPALLIADDQAAIYALRILLATAGGAAFLPDQARSAALFVRLKAGFLCATLSRTVVDFRHAGLFLRREARGLPPAATAVDNTIWDGRRHITLNDMSGALLIAPLGAAAARRLAIDDGETPASLIRAALAAEPTLLQAFENLGLPQGEPRLPVFAARPVVSPFARFLPSFDLAPARAVAELIGASPLPASPLGGHSAD.

An ATP-binding site is contributed by Ser-27 to Ser-32.

This sequence belongs to the tRNA(Ile)-lysidine synthase family.

Its subcellular location is the cytoplasm. The enzyme catalyses cytidine(34) in tRNA(Ile2) + L-lysine + ATP = lysidine(34) in tRNA(Ile2) + AMP + diphosphate + H(+). Its function is as follows. Ligates lysine onto the cytidine present at position 34 of the AUA codon-specific tRNA(Ile) that contains the anticodon CAU, in an ATP-dependent manner. Cytidine is converted to lysidine, thus changing the amino acid specificity of the tRNA from methionine to isoleucine. The chain is tRNA(Ile)-lysidine synthase from Mesorhizobium japonicum (strain LMG 29417 / CECT 9101 / MAFF 303099) (Mesorhizobium loti (strain MAFF 303099)).